The following is a 307-amino-acid chain: Pantothenate kinase (307 aa).

90-97 (GSVAVGKS) contributes to the ATP binding site.

Belongs to the prokaryotic pantothenate kinase family.

Its subcellular location is the cytoplasm. The enzyme catalyses (R)-pantothenate + ATP = (R)-4'-phosphopantothenate + ADP + H(+). Its pathway is cofactor biosynthesis; coenzyme A biosynthesis; CoA from (R)-pantothenate: step 1/5. The polypeptide is Pantothenate kinase (Limosilactobacillus fermentum (strain NBRC 3956 / LMG 18251) (Lactobacillus fermentum)).